Consider the following 276-residue polypeptide: Exosome complex component RRP43 (276 aa).

The residue at position 2 (alanine 2) is an N-acetylalanine.

Belongs to the RNase PH family. As to quaternary structure, component of the RNA exosome core complex (Exo-9), composed of EXOSC1, EXOSC2, EXOSC3, EXOSC4, EXOSC5, EXOSC6, EXOSC7, EXOSC8 and EXOSC9; within the complex interacts with EXOSC5 and EXOSC6. The catalytically inactive RNA exosome core complex (Exo-9) associates with the catalytic subunit EXOSC10/RRP6. Exo-9 may associate with DIS3 to form the nucleolar exosome complex, or DIS3L to form the cytoplasmic exosome complex. Exo-9 is formed by a hexameric base ring consisting of the heterodimers EXOSC4-EXOSC9, EXOSC5-EXOSC8 and EXOSC6-EXOSC7, and a cap ring consisting of EXOSC1, EXOSC2 and EXOSC3. The RNA exosome complex associates with cofactors C1D/RRP47, MPHOSPH6/MPP6 and MTREX/MTR4. Binds outer membrane protein opap from Neisseria gonorrhoeae.

It is found in the cytoplasm. The protein localises to the nucleus. It localises to the nucleolus. Its function is as follows. Non-catalytic component of the RNA exosome complex which has 3'-&gt;5' exoribonuclease activity and participates in a multitude of cellular RNA processing and degradation events. In the nucleus, the RNA exosome complex is involved in proper maturation of stable RNA species such as rRNA, snRNA and snoRNA, in the elimination of RNA processing by-products and non-coding 'pervasive' transcripts, such as antisense RNA species and promoter-upstream transcripts (PROMPTs), and of mRNAs with processing defects, thereby limiting or excluding their export to the cytoplasm. The RNA exosome may be involved in Ig class switch recombination (CSR) and/or Ig variable region somatic hypermutation (SHM) by targeting AICDA deamination activity to transcribed dsDNA substrates. In the cytoplasm, the RNA exosome complex is involved in general mRNA turnover and specifically degrades inherently unstable mRNAs containing AU-rich elements (AREs) within their 3' untranslated regions, and in RNA surveillance pathways, preventing translation of aberrant mRNAs. It seems to be involved in degradation of histone mRNA. The catalytic inactive RNA exosome core complex of 9 subunits (Exo-9) is proposed to play a pivotal role in the binding and presentation of RNA for ribonucleolysis, and to serve as a scaffold for the association with catalytic subunits and accessory proteins or complexes. EXOSC8 binds to ARE-containing RNAs. In Homo sapiens (Human), this protein is Exosome complex component RRP43 (EXOSC8).